The primary structure comprises 727 residues: Prolyl endopeptidase-like (727 aa).

Active-site charge relay system residues include serine 559, aspartate 645, and histidine 690.

It belongs to the peptidase S9A family. As to quaternary structure, homodimer. Interacts with the AP-1 complex.

The protein resides in the cytoplasm. Its subcellular location is the cytosol. It is found in the golgi apparatus. The protein localises to the trans-Golgi network. It localises to the cytoskeleton. The protein resides in the nucleus. In terms of biological role, serine peptidase whose precise substrate specificity remains unclear. Does not cleave peptides after a arginine or lysine residue. Regulates trans-Golgi network morphology and sorting by regulating the membrane binding of the AP-1 complex. May play a role in the regulation of synaptic vesicle exocytosis. The polypeptide is Prolyl endopeptidase-like (PREPL) (Macaca fascicularis (Crab-eating macaque)).